Here is a 467-residue protein sequence, read N- to C-terminus: Dynactin subunit 4 (467 aa).

At Ala-2 the chain carries N-acetylalanine. Residue Lys-222 forms a Glycyl lysine isopeptide (Lys-Gly) (interchain with G-Cter in SUMO2) linkage. The residue at position 414 (Thr-414) is a Phosphothreonine.

This sequence belongs to the dynactin subunit 4 family. As to quaternary structure, subunit of dynactin, a multiprotein complex part of a tripartite complex with dynein and a adapter, such as BICDL1, BICD2 or HOOK3. The dynactin complex is built around ACTR1A/ACTB filament and consists of an actin-related filament composed of a shoulder domain, a pointed end and a barbed end. Its length is defined by its flexible shoulder domain. The soulder is composed of 2 DCTN1 subunits, 4 DCTN2 and 2 DCTN3. The 4 DCNT2 (via N-terminus) bind the ACTR1A filament and act as molecular rulers to determine the length. The pointed end is important for binding dynein-dynactin cargo adapters. Consists of 4 subunits: ACTR10, DCNT4, DCTN5 and DCTN6. The barbed end is composed of a CAPZA1:CAPZB heterodimers, which binds ACTR1A/ACTB filament and dynactin and stabilizes dynactin. Interacts with ATP7B, but not ATP7A, in a copper-dependent manner. Interacts with ANK2; this interaction is required for localization at costameres. Interacts with N4BP2L1.

The protein localises to the cytoplasm. Its subcellular location is the cytoskeleton. The protein resides in the microtubule organizing center. It is found in the centrosome. It localises to the stress fiber. The protein localises to the cell cortex. Its subcellular location is the myofibril. The protein resides in the sarcomere. Part of the dynactin complex that activates the molecular motor dynein for ultra-processive transport along microtubules. Together with dynein is involved in spindle assembly and cytokinesis. The sequence is that of Dynactin subunit 4 (DCTN4) from Sus scrofa (Pig).